We begin with the raw amino-acid sequence, 518 residues long: Retinal dehydrogenase 2 (518 aa).

A Phosphotyrosine modification is found at Tyr-168. Residues 184 to 186 (IPW), 210 to 213 (KPAE), and 264 to 266 (STE) each bind NAD(+). Glu-286 acts as the Proton acceptor in catalysis. The active-site Nucleophile is the Cys-320. Residue Ser-351 is modified to Phosphoserine. Residues 366–370 (KQYNK) and Glu-417 each bind NAD(+).

The protein belongs to the aldehyde dehydrogenase family. Homotetramer. As to expression, found in testis and less abundantly in lung, brain, heart, liver and kidney.

Its subcellular location is the cytoplasm. The enzyme catalyses retinal + NAD(+) + H2O = retinoate + NADH + 2 H(+). The catalysed reaction is all-trans-retinal + NAD(+) + H2O = all-trans-retinoate + NADH + 2 H(+). It carries out the reaction all-trans-13,14-dihydroretinal + NAD(+) + H2O = all-trans-13,14-dihydroretinoate + NADH + 2 H(+). The protein operates within cofactor metabolism; retinol metabolism. Its function is as follows. Catalyzes the NAD-dependent oxidation of aldehyde substrates, such as all-trans-retinal and all-trans-13,14-dihydroretinal, to their corresponding carboxylic acids, all-trans-retinoate and all-trans-13,14-dihydroretinoate, respectively. Retinoate signaling is critical for the transcriptional control of many genes, for instance it is crucial for initiation of meiosis in both male and female. Recognizes retinal as substrate, both in its free form and when bound to cellular retinol-binding protein. Lacks activity with benzaldehyde, acetaldehyde and octanal. Displays complete lack of activity with citral. The protein is Retinal dehydrogenase 2 (Aldh1a2) of Rattus norvegicus (Rat).